The following is a 472-amino-acid chain: MGCDRNCGLIAGAVIGAVLAVFGGILMPVGDMLVEKTIKKEVVLEEGTIAFKNWVKTGTTVYRQFWIFDVQNPDEVAVNSSKIKVKQRGPYTYRVRYLAKENITQDPVDSTVSFVQPNGAIFEPSLSVGTENDTFTILNLAVAAAPHIYTNSFVQVVLNSLIKKSKSSMFQTRTLRELLWGYKDPFLSLVPYPIPTTVGVFYPYNDTADGVYKVFNGKDDINKVAIIDSYKGKRNLSYWESYCDMINGTDAASFPPFVEKSRVLRFFSSDICRSIYAVFGSDIELKGIPVYRFILPAKAFASPVQNPDNHCFCTEKVISNNCTSYGVLDISKCKQGRPVYISLPHFLHASPDISEPIEGLNPNEEEHRTYLDVEPITGFTLQFAKRLQVNILVKPARKIEALKNLKRNYIVPILWLNETGTIGDEKAEMFRNQVTGKVKLLGLVEMVLLGLGVVMFVAFMISYCACRSKNRK.

Residues 1 to 7 lie on the Cytoplasmic side of the membrane; it reads MGCDRNC. Residues C3 and C7 are each lipidated (S-palmitoyl cysteine). The chain crosses the membrane as a helical span at residues 8–29; that stretch reads GLIAGAVIGAVLAVFGGILMPV. Topologically, residues 30 to 439 are extracellular; sequence GDMLVEKTIK…FRNQVTGKVK (410 aa). N-linked (GlcNAc...) asparagine glycosylation is found at N79, N102, N132, N205, N235, N247, N321, and N417. Positions 93 to 120 are required for interaction with thrombospondins, THBS1 and THBS2; that stretch reads YRVRYLAKENITQDPVDSTVSFVQPNGA. 3 disulfide bridges follow: C243/C311, C272/C333, and C313/C322. A helical membrane pass occupies residues 440–461; it reads LLGLVEMVLLGLGVVMFVAFMI. The interaction with PTK2, PXN and LYN stretch occupies residues 460-472; it reads MISYCACRSKNRK. Over 462–472 the chain is Cytoplasmic; it reads SYCACRSKNRK. 2 S-palmitoyl cysteine lipidation sites follow: C464 and C466. Residues K469 and K472 each participate in a glycyl lysine isopeptide (Lys-Gly) (interchain with G-Cter in ubiquitin) cross-link.

It belongs to the CD36 family. In terms of assembly, interacts with THBS1 and THBS2; the interactions mediate the THBS antiangiogenic activity. Upon interaction with a ligand, such as oxidized low-density lipoprotein (oxLDL) or amyloid-beta 42, rapidly forms a complex with TLR4 and TLR6; the complex is internalized and triggers an inflammatory signal. Through its C-terminus, interacts with PTK2, PXN and LYN, but not with SRC. LYN kinase activity is required for facilitating TLR4:TLR6 heterodimerization and signal initiation. Upon interaction with ligands such as diacylated lipopeptides, interacts with the TLR2:TLR6 heterodimer. Interacts with CD9, CD81, FCER1G, ITGB2 and/or ITGB2; forming a membrane heteromeric complex required for the internalization of CD36 and its ligands. Interacts (when palmitoylated) with ARF6; this interaction mediates CD36 transport to the plasma membrane. Post-translationally, palmitoylated by ZDHHC5. Palmitoylation is required for proper localization at the plasma membrane. In terms of processing, ubiquitinated at Lys-469 and Lys-472. Ubiquitination is induced by fatty acids such as oleic acid and leads to degradation by the proteasome. Ubiquitination and degradation are inhibited by insulin which blocks the effect of fatty acids.

The protein resides in the cell membrane. It is found in the membrane raft. It localises to the golgi apparatus. The protein localises to the apical cell membrane. It catalyses the reaction butanoate(out) = butanoate(in). The enzyme catalyses (9Z)-octadecenoate(out) = (9Z)-octadecenoate(in). It carries out the reaction (9Z,12Z)-octadecadienoate(out) = (9Z,12Z)-octadecadienoate(in). The catalysed reaction is tetradecanoate(out) = tetradecanoate(in). It catalyses the reaction hexadecanoate(out) = hexadecanoate(in). The enzyme catalyses tetracosanoate(out) = tetracosanoate(in). Multifunctional glycoprotein that acts as a receptor for a broad range of ligands. Ligands can be of proteinaceous nature like thrombospondin, fibronectin, collagen or amyloid-beta as well as of lipidic nature such as oxidized low-density lipoprotein (oxLDL), anionic phospholipids, long-chain fatty acids and bacterial diacylated lipopeptides. They are generally multivalent and can therefore engage multiple receptors simultaneously, the resulting formation of CD36 clusters initiates signal transduction and internalization of receptor-ligand complexes. The dependency on coreceptor signaling is strongly ligand specific. Cellular responses to these ligands are involved in angiogenesis, inflammatory response, fatty acid metabolism, taste and dietary fat processing in the intestine. Binds long-chain fatty acids and facilitates their transport into cells, thus participating in muscle lipid utilization, adipose energy storage, and gut fat absorption. Mechanistically, binding of fatty acids activates downstream kinase LYN, which phosphorylates the palmitoyltransferase ZDHHC5 and inactivates it, resulting in the subsequent depalmitoylation of CD36 and caveolar endocytosis. In the small intestine, plays a role in proximal absorption of dietary fatty acid and cholesterol for optimal chylomicron formation, possibly through the activation of MAPK1/3 (ERK1/2) signaling pathway. Involved in oral fat perception and preferences. Detection into the tongue of long-chain fatty acids leads to a rapid and sustained rise in flux and protein content of pancreatobiliary secretions. In taste receptor cells, mediates the induction of an increase in intracellular calcium levels by long-chain fatty acids, leading to the activation of the gustatory neurons in the nucleus of the solitary tract. Important factor in both ventromedial hypothalamus neuronal sensing of long-chain fatty acid and the regulation of energy and glucose homeostasis. Receptor for thrombospondins, THBS1 and THBS2, mediating their antiangiogenic effects. As a coreceptor for TLR4:TLR6 heterodimer, promotes inflammation in monocytes/macrophages. Upon ligand binding, such as oxLDL or amyloid-beta 42, interacts with the heterodimer TLR4:TLR6, the complex is internalized and triggers inflammatory response, leading to NF-kappa-B-dependent production of CXCL1, CXCL2 and CCL9 cytokines, via MYD88 signaling pathway, and CCL5 cytokine, via TICAM1 signaling pathway, as well as IL1B secretion, through the priming and activation of the NLRP3 inflammasome. Selective and nonredundant sensor of microbial diacylated lipopeptide that signal via TLR2:TLR6 heterodimer, this cluster triggers signaling from the cell surface, leading to the NF-kappa-B-dependent production of TNF, via MYD88 signaling pathway and subsequently is targeted to the Golgi in a lipid-raft dependent pathway. The protein is Platelet glycoprotein 4 (CD36) of Mesocricetus auratus (Golden hamster).